The following is a 275-amino-acid chain: Large ribosomal subunit protein uL2 (275 aa).

Positions 35 to 49 (DSQSSTAGRNNNGRI) are enriched in polar residues. 2 disordered regions span residues 35–59 (DSQS…GGHK) and 224–275 (AMNP…RHKR). Residues 50 to 59 (TTRHKGGGHK) are compositionally biased toward basic residues.

The protein belongs to the universal ribosomal protein uL2 family. In terms of assembly, part of the 50S ribosomal subunit. Forms a bridge to the 30S subunit in the 70S ribosome.

Functionally, one of the primary rRNA binding proteins. Required for association of the 30S and 50S subunits to form the 70S ribosome, for tRNA binding and peptide bond formation. It has been suggested to have peptidyltransferase activity; this is somewhat controversial. Makes several contacts with the 16S rRNA in the 70S ribosome. The polypeptide is Large ribosomal subunit protein uL2 (Burkholderia cenocepacia (strain HI2424)).